A 329-amino-acid polypeptide reads, in one-letter code: Alpha/beta hydrolase domain-containing protein 17C (329 aa).

A compositionally biased stretch (low complexity) spans 53 to 79 (GASAPAPAQATAAAAAAQPAPQQPEEG). The interval 53–85 (GASAPAPAQATAAAAAAQPAPQQPEEGAGAGPG) is disordered. Residues Ser211, Asp276, and His305 each act as charge relay system in the active site.

The protein belongs to the AB hydrolase superfamily. ABHD17 family. Post-translationally, palmitoylated on cysteine residues located in a cysteine cluster at the N-terminus which promotes membrane localization. Palmitoylation is required for post-synaptic localization and for depalmitoylating activity towards DLG4/PSD95.

The protein resides in the recycling endosome membrane. The protein localises to the cell projection. Its subcellular location is the dendritic spine. It localises to the postsynaptic density membrane. It catalyses the reaction S-hexadecanoyl-L-cysteinyl-[protein] + H2O = L-cysteinyl-[protein] + hexadecanoate + H(+). Inhibited by palmostatin-B. Functionally, hydrolyzes fatty acids from S-acylated cysteine residues in proteins. Has depalmitoylating activity towards NRAS and DLG4/PSD95. This Homo sapiens (Human) protein is Alpha/beta hydrolase domain-containing protein 17C.